A 117-amino-acid polypeptide reads, in one-letter code: NADH-quinone oxidoreductase subunit A (117 aa).

3 helical membrane-spanning segments follow: residues 4–24 (WIGV…GMLT), 64–84 (LMFV…VSFV), and 86–106 (LGLA…LGLW).

It belongs to the complex I subunit 3 family. NDH-1 is composed of 14 different subunits. Subunits NuoA, H, J, K, L, M, N constitute the membrane sector of the complex.

The protein localises to the cell membrane. It catalyses the reaction a quinone + NADH + 5 H(+)(in) = a quinol + NAD(+) + 4 H(+)(out). Functionally, NDH-1 shuttles electrons from NADH, via FMN and iron-sulfur (Fe-S) centers, to quinones in the respiratory chain. The immediate electron acceptor for the enzyme in this species is believed to be a menaquinone. Couples the redox reaction to proton translocation (for every two electrons transferred, four hydrogen ions are translocated across the cytoplasmic membrane), and thus conserves the redox energy in a proton gradient. This Desulforamulus reducens (strain ATCC BAA-1160 / DSM 100696 / MI-1) (Desulfotomaculum reducens) protein is NADH-quinone oxidoreductase subunit A.